We begin with the raw amino-acid sequence, 523 residues long: 2-isopropylmalate synthase (523 aa).

In terms of domain architecture, Pyruvate carboxyltransferase spans 5-267 (VIIFDTTLRD…HTAINHQEIW (263 aa)). Mn(2+) contacts are provided by D14, H202, H204, and N238. The interval 392–523 (RLDYFSVQSG…QHNENNKETV (132 aa)) is regulatory domain.

This sequence belongs to the alpha-IPM synthase/homocitrate synthase family. LeuA type 1 subfamily. In terms of assembly, homodimer. Mn(2+) is required as a cofactor.

It localises to the cytoplasm. It carries out the reaction 3-methyl-2-oxobutanoate + acetyl-CoA + H2O = (2S)-2-isopropylmalate + CoA + H(+). It participates in amino-acid biosynthesis; L-leucine biosynthesis; L-leucine from 3-methyl-2-oxobutanoate: step 1/4. Catalyzes the condensation of the acetyl group of acetyl-CoA with 3-methyl-2-oxobutanoate (2-ketoisovalerate) to form 3-carboxy-3-hydroxy-4-methylpentanoate (2-isopropylmalate). This is 2-isopropylmalate synthase from Shigella flexneri serotype 5b (strain 8401).